The chain runs to 81 residues: Acyl carrier protein (81 aa).

The Carrier domain maps to 2–77 (ASVEEKVKQI…DAVDYITAHA (76 aa)). An O-(pantetheine 4'-phosphoryl)serine modification is found at Ser-37.

The protein belongs to the acyl carrier protein (ACP) family. 4'-phosphopantetheine is transferred from CoA to a specific serine of apo-ACP by AcpS. This modification is essential for activity because fatty acids are bound in thioester linkage to the sulfhydryl of the prosthetic group.

It localises to the cytoplasm. The protein operates within lipid metabolism; fatty acid biosynthesis. Carrier of the growing fatty acid chain in fatty acid biosynthesis. In Koribacter versatilis (strain Ellin345), this protein is Acyl carrier protein.